We begin with the raw amino-acid sequence, 211 residues long: Ras-related protein RABB1c (211 aa).

Serine 2 carries the N-acetylserine modification. Glycine 13–cysteine 21 contributes to the GTP binding site. The Effector region motif lies at histidine 35 to phenylalanine 43. GTP is bound by residues aspartate 61–glutamine 65, asparagine 119–aspartate 122, and serine 149–lysine 151. S-geranylgeranyl cysteine attachment occurs at residues cysteine 209 and cysteine 210.

Belongs to the small GTPase superfamily. Rab family.

Its subcellular location is the cell membrane. Intracellular vesicle trafficking and protein transport. The chain is Ras-related protein RABB1c (RABB1C) from Arabidopsis thaliana (Mouse-ear cress).